A 138-amino-acid chain; its full sequence is Large ribosomal subunit protein bL12c (138 aa).

It belongs to the bacterial ribosomal protein bL12 family. As to quaternary structure, homodimer. Part of the ribosomal stalk of the 50S ribosomal subunit. Forms a multimeric L10(L12)X complex, where L10 forms an elongated spine to which 2 to 4 L12 dimers bind in a sequential fashion. Binds GTP-bound translation factors.

Its subcellular location is the plastid. Forms part of the ribosomal stalk which helps the ribosome interact with GTP-bound translation factors. Is thus essential for accurate translation. This is Large ribosomal subunit protein bL12c from Euglena longa (Euglenophycean alga).